A 507-amino-acid polypeptide reads, in one-letter code: Rho GTPase-activating protein 19 (507 aa).

A Rho-GAP domain is found at 112 to 305; it reads APLTEEGIAQ…FMIKHSQKLF (194 aa). Disordered stretches follow at residues 344 to 371, 400 to 419, and 483 to 507; these read FLKH…QQHT, KNTP…KKHV, and DLQI…ETSI. Residues 355-369 are compositionally biased toward low complexity; that stretch reads SSPSSSTSLQEQTQQ. The segment covering 400-413 has biased composition (polar residues); the sequence is KNTPRTPVSDTQVP. Basic and acidic residues predominate over residues 483-492; that stretch reads DLQIRKEASS.

In terms of biological role, GTPase activator for the Rho-type GTPases by converting them to an inactive GDP-bound state. This Xenopus laevis (African clawed frog) protein is Rho GTPase-activating protein 19 (arhgap19).